A 334-amino-acid polypeptide reads, in one-letter code: Beta-ketoacyl-[acyl-carrier-protein] synthase III (334 aa).

Catalysis depends on residues Cys-114 and His-253. The interval 254 to 258 (QANIR) is ACP-binding. Asn-283 is a catalytic residue.

Belongs to the thiolase-like superfamily. FabH family. In terms of assembly, homodimer.

The protein localises to the cytoplasm. It carries out the reaction malonyl-[ACP] + acetyl-CoA + H(+) = 3-oxobutanoyl-[ACP] + CO2 + CoA. It participates in lipid metabolism; fatty acid biosynthesis. In terms of biological role, catalyzes the condensation reaction of fatty acid synthesis by the addition to an acyl acceptor of two carbons from malonyl-ACP. Catalyzes the first condensation reaction which initiates fatty acid synthesis and may therefore play a role in governing the total rate of fatty acid production. Possesses both acetoacetyl-ACP synthase and acetyl transacylase activities. Its substrate specificity determines the biosynthesis of branched-chain and/or straight-chain of fatty acids. This is Beta-ketoacyl-[acyl-carrier-protein] synthase III from Campylobacter curvus (strain 525.92).